Here is a 421-residue protein sequence, read N- to C-terminus: Phosphoglycerate kinase, cytosolic (421 aa).

Val23, Asp24, Phe25, Asn26, Arg39, Ser61, His62, Gly64, Arg65, Arg135, His172, and Arg173 together coordinate (2R)-3-phosphoglycerate. ADP-binding residues include Gly218 and Ala219. Gly218 is a CDP binding site. Positions 219 and 220 each coordinate AMP. Ala219 lines the ATP pocket. Residue Ala219 coordinates Mg(2+). (2R)-3-phosphoglycerate is bound at residue Lys220. Position 223 (Asp223) interacts with CDP. A Mg(2+)-binding site is contributed by Asp223. Lys224 and Gly242 together coordinate ADP. Lys224 is an AMP binding site. Lys224 contributes to the ATP binding site. Gly242 lines the CDP pocket. AMP-binding residues include Ala243 and Ala315. ATP-binding residues include Ala243 and Ala315. ADP is bound by residues Ala315 and Asn339. Residues Gly340 and Phe345 each coordinate CDP. Residues Phe345, Glu346, Asp378, and Ser379 each coordinate ADP. Glu346 provides a ligand contact to AMP. ATP is bound by residues Glu346, Asp378, and Ser379. Asp378 contributes to the Mg(2+) binding site.

The protein belongs to the phosphoglycerate kinase family. As to quaternary structure, monomer. Mg(2+) serves as cofactor.

The protein resides in the cytoplasm. It catalyses the reaction (2R)-3-phosphoglycerate + ATP = (2R)-3-phospho-glyceroyl phosphate + ADP. Its pathway is carbohydrate degradation; glycolysis; pyruvate from D-glyceraldehyde 3-phosphate: step 2/5. This is Phosphoglycerate kinase, cytosolic from Trypanosoma brucei brucei.